The following is a 440-amino-acid chain: Trigger factor (440 aa).

A PPIase FKBP-type domain is found at 176 to 261 (GDKVVIDYQN…VKSIYVVKDV (86 aa)).

This sequence belongs to the FKBP-type PPIase family. Tig subfamily.

It is found in the cytoplasm. It catalyses the reaction [protein]-peptidylproline (omega=180) = [protein]-peptidylproline (omega=0). Its function is as follows. Involved in protein export. Acts as a chaperone by maintaining the newly synthesized protein in an open conformation. Functions as a peptidyl-prolyl cis-trans isomerase. The protein is Trigger factor of Ehrlichia canis (strain Jake).